The following is a 292-amino-acid chain: Glycine--tRNA ligase alpha subunit (292 aa).

The protein belongs to the class-II aminoacyl-tRNA synthetase family. As to quaternary structure, tetramer of two alpha and two beta subunits.

The protein resides in the cytoplasm. It carries out the reaction tRNA(Gly) + glycine + ATP = glycyl-tRNA(Gly) + AMP + diphosphate. The protein is Glycine--tRNA ligase alpha subunit of Synechococcus elongatus (strain ATCC 33912 / PCC 7942 / FACHB-805) (Anacystis nidulans R2).